Here is a 175-residue protein sequence, read N- to C-terminus: ATP synthase subunit delta (175 aa).

Belongs to the ATPase delta chain family. In terms of assembly, F-type ATPases have 2 components, F(1) - the catalytic core - and F(0) - the membrane proton channel. F(1) has five subunits: alpha(3), beta(3), gamma(1), delta(1), epsilon(1). F(0) has three main subunits: a(1), b(2) and c(10-14). The alpha and beta chains form an alternating ring which encloses part of the gamma chain. F(1) is attached to F(0) by a central stalk formed by the gamma and epsilon chains, while a peripheral stalk is formed by the delta and b chains.

The protein resides in the cell membrane. F(1)F(0) ATP synthase produces ATP from ADP in the presence of a proton or sodium gradient. F-type ATPases consist of two structural domains, F(1) containing the extramembraneous catalytic core and F(0) containing the membrane proton channel, linked together by a central stalk and a peripheral stalk. During catalysis, ATP synthesis in the catalytic domain of F(1) is coupled via a rotary mechanism of the central stalk subunits to proton translocation. Its function is as follows. This protein is part of the stalk that links CF(0) to CF(1). It either transmits conformational changes from CF(0) to CF(1) or is implicated in proton conduction. This is ATP synthase subunit delta from Stenotrophomonas maltophilia (strain K279a).